A 361-amino-acid chain; its full sequence is Homer protein homolog 3 (361 aa).

The interval 1 to 80 (MSTAREQPIF…TKTSQKFGQW (80 aa)) is required for interaction with NFATC2. In terms of domain architecture, WH1 spans 1–113 (MSTAREQPIF…EKFQEVKEAA (113 aa)). The disordered stretch occupies residues 114-169 (RLAREKSQDGGELTSPALGLASHQVPPSPLVSANGPGEEKLFRSQSADAPGPTERE). 2 positions are modified to phosphoserine: S120 and S159. Coiled coils occupy residues 191–243 (ALQD…SEVT) and 254–358 (GQSL…RLAE).

Belongs to the Homer family. As to quaternary structure, tetramer. Isoform 1 and isoform 2 encode coiled-coil structures that mediate homo- and heteromultimerization. Interacts with NFATC2; interaction is calcium independent; interaction competes with PPP3CA for NFATC2 binding; interaction is reduced by AKT activation. Interacts with NFATC1 and NFATC4. Interacts with SHANK1; forms a high-order complex at least composed of SHANK1 and HOMER3; the complex formation is regulated by CAMK2A-mediated phosphorylation.

The protein resides in the cytoplasm. It localises to the postsynaptic density. The protein localises to the synapse. Functionally, postsynaptic density scaffolding protein. Binds and cross-links cytoplasmic regions of GRM1, GRM5, ITPR1, DNM3, RYR1, RYR2, SHANK1 and SHANK3. By physically linking GRM1 and GRM5 with ER-associated ITPR1 receptors, it aids the coupling of surface receptors to intracellular calcium release. Isoforms can be differently regulated and may play an important role in maintaining the plasticity at glutamatergic synapses. Negatively regulates T cell activation by inhibiting the calcineurin-NFAT pathway. Acts by competing with calcineurin/PPP3CA for NFAT protein binding, hence preventing NFAT activation by PPP3CA. This chain is Homer protein homolog 3, found in Homo sapiens (Human).